A 153-amino-acid chain; its full sequence is Coiled-coil domain-containing protein 182 (153 aa).

Positions 46 to 109 form a coiled coil; it reads ADLEILQQKV…RLREEEDRGI (64 aa).

The sequence is that of Coiled-coil domain-containing protein 182 (CCDC182) from Homo sapiens (Human).